Consider the following 296-residue polypeptide: 4-diphosphocytidyl-2-C-methyl-D-erythritol kinase (296 aa).

Lys18 is an active-site residue. 102–112 (PMGGGIGGGSS) lines the ATP pocket. The active site involves Asp144.

It belongs to the GHMP kinase family. IspE subfamily.

It catalyses the reaction 4-CDP-2-C-methyl-D-erythritol + ATP = 4-CDP-2-C-methyl-D-erythritol 2-phosphate + ADP + H(+). It functions in the pathway isoprenoid biosynthesis; isopentenyl diphosphate biosynthesis via DXP pathway; isopentenyl diphosphate from 1-deoxy-D-xylulose 5-phosphate: step 3/6. Catalyzes the phosphorylation of the position 2 hydroxy group of 4-diphosphocytidyl-2C-methyl-D-erythritol. This chain is 4-diphosphocytidyl-2-C-methyl-D-erythritol kinase, found in Vibrio atlanticus (strain LGP32) (Vibrio splendidus (strain Mel32)).